Reading from the N-terminus, the 344-residue chain is L-threonine 3-dehydrogenase (344 aa).

Residue cysteine 42 participates in Zn(2+) binding. Active-site charge relay system residues include threonine 44 and histidine 47. The Zn(2+) site is built by histidine 67, glutamate 68, cysteine 97, cysteine 100, cysteine 103, and cysteine 111. NAD(+)-binding positions include isoleucine 179, aspartate 199, arginine 204, 266–268 (LGI), and 290–291 (IY).

It belongs to the zinc-containing alcohol dehydrogenase family. In terms of assembly, homotetramer. Zn(2+) is required as a cofactor.

The protein localises to the cytoplasm. It catalyses the reaction L-threonine + NAD(+) = (2S)-2-amino-3-oxobutanoate + NADH + H(+). It functions in the pathway amino-acid degradation; L-threonine degradation via oxydo-reductase pathway; glycine from L-threonine: step 1/2. Catalyzes the NAD(+)-dependent oxidation of L-threonine to 2-amino-3-ketobutyrate. The chain is L-threonine 3-dehydrogenase from Mesorhizobium japonicum (strain LMG 29417 / CECT 9101 / MAFF 303099) (Mesorhizobium loti (strain MAFF 303099)).